The following is a 254-amino-acid chain: Adenosylcobinamide-GDP ribazoletransferase (254 aa).

A run of 7 helical transmembrane segments spans residues 27–47 (SSLYWFPVVGLVIGGIVVLLA), 50–70 (GMGVGWPELAAVLALLGGLIL), 104–124 (VGSFGSLALIGVMLFKWICLL), 131–151 (AYGMIAAGAVLSRTAQVLLAA), 170–190 (AGWPHLLVASISGVVLLFVLL), 194–214 (LAPSLILLFGSVVALFFVGWL), and 233–253 (LVEAAVWLLAALWLKGLFWAI).

The protein belongs to the CobS family. Mg(2+) is required as a cofactor.

It localises to the cell inner membrane. It carries out the reaction alpha-ribazole + adenosylcob(III)inamide-GDP = adenosylcob(III)alamin + GMP + H(+). The catalysed reaction is alpha-ribazole 5'-phosphate + adenosylcob(III)inamide-GDP = adenosylcob(III)alamin 5'-phosphate + GMP + H(+). Its pathway is cofactor biosynthesis; adenosylcobalamin biosynthesis; adenosylcobalamin from cob(II)yrinate a,c-diamide: step 7/7. In terms of biological role, joins adenosylcobinamide-GDP and alpha-ribazole to generate adenosylcobalamin (Ado-cobalamin). Also synthesizes adenosylcobalamin 5'-phosphate from adenosylcobinamide-GDP and alpha-ribazole 5'-phosphate. This chain is Adenosylcobinamide-GDP ribazoletransferase, found in Chlorobaculum tepidum (strain ATCC 49652 / DSM 12025 / NBRC 103806 / TLS) (Chlorobium tepidum).